The following is a 702-amino-acid chain: Epsin-1 (702 aa).

One can recognise an ENTH domain in the interval 10–142; that stretch reads NFSKGYTDTQ…EDEHALKEAR (133 aa). Composition is skewed to basic and acidic residues over residues 136–160 and 183–192; these read HALK…SSRF and SRYDDDDRDH. Positions 136 to 285 are disordered; it reads HALKEARGDS…HQREREQQEQ (150 aa). Positions 193 to 214 are enriched in basic residues; the sequence is RSRRRSRSRRPGRSRSRRRSRR. 4 positions are modified to phosphoserine: serine 212, serine 216, serine 218, and serine 223. UIM domains follow at residues 226–245 and 254–273; these read ENDP…AEED and DSEA…DEAR. Basic and acidic residues predominate over residues 230-248; that stretch reads ELQRVIEESKRQAEEDAKR. At serine 255 the chain carries Phosphoserine. Residues 266-283 are compositionally biased toward basic and acidic residues; the sequence is SKEEDEARQRHQREREQQ. Phosphothreonine is present on threonine 406. Disordered regions lie at residues 504–589 and 683–702; these read NHTG…RTGD and PMQG…LIDL. Positions 514–534 are enriched in polar residues; sequence TGLQRQTTGYTGNNNPYSRPL. The span at 535-549 shows a compositional bias: low complexity; sequence QSQSTGILQQQQQQS. A compositionally biased stretch (polar residues) spans 557 to 577; the sequence is KTGSNNPFAQFSNLPSQSTAP. Low complexity predominate over residues 683–695; sequence PMQGMQQQSMQPQ.

The protein belongs to the epsin family.

Its subcellular location is the cytoplasm. The protein localises to the membrane. Binds to membranes enriched in phosphatidylinositol 3,5-bisphosphate (PtdIns(3,5)P2) and phosphatidylinositol 4,5-bisphosphate (PtdIns(4,5)P2). Required for endocytosis and localization of actin. The chain is Epsin-1 (ent1) from Schizosaccharomyces pombe (strain 972 / ATCC 24843) (Fission yeast).